Reading from the N-terminus, the 442-residue chain is Putative zinc metalloprotease PM1991 (442 aa).

Residue His21 coordinates Zn(2+). Residue Glu22 is part of the active site. His25 serves as a coordination point for Zn(2+). A helical membrane pass occupies residues 97 to 119 (AFVIAAGPIANFLFAILAYFTIY). The region spanning 198 to 286 (DWRFDPEKES…FSFVVLTPEL (89 aa)) is the PDZ domain. A run of 2 helical transmembrane segments spans residues 366-388 (IGLI…MNLF) and 418-440 (LSYR…NDFL).

Belongs to the peptidase M50B family. The cofactor is Zn(2+).

It is found in the cell inner membrane. The polypeptide is Putative zinc metalloprotease PM1991 (Pasteurella multocida (strain Pm70)).